Here is a 364-residue protein sequence, read N- to C-terminus: Methylenetetrahydrofolate--tRNA-(uracil-5-)-methyltransferase TrmFO (364 aa).

An FAD-binding site is contributed by 11 to 16; the sequence is GAGLAG. Polar residues predominate over residues 335-352; sequence SYLNQPCSSANDPTSSLL. Residues 335–364 are disordered; it reads SYLNQPCSSANDPTSSLLDRSPAQRDIPLQ.

It belongs to the MnmG family. TrmFO subfamily. It depends on FAD as a cofactor.

It is found in the cytoplasm. The enzyme catalyses uridine(54) in tRNA + (6R)-5,10-methylene-5,6,7,8-tetrahydrofolate + NADH + H(+) = 5-methyluridine(54) in tRNA + (6S)-5,6,7,8-tetrahydrofolate + NAD(+). The catalysed reaction is uridine(54) in tRNA + (6R)-5,10-methylene-5,6,7,8-tetrahydrofolate + NADPH + H(+) = 5-methyluridine(54) in tRNA + (6S)-5,6,7,8-tetrahydrofolate + NADP(+). Catalyzes the folate-dependent formation of 5-methyl-uridine at position 54 (M-5-U54) in all tRNAs. The sequence is that of Methylenetetrahydrofolate--tRNA-(uracil-5-)-methyltransferase TrmFO from Prochlorococcus marinus (strain MIT 9313).